Consider the following 165-residue polypeptide: Sec-independent protein translocase protein TatB (165 aa).

The chain crosses the membrane as a helical span at residues 1-21 (MFDVSFTELIVIGVVALIVLG). A compositionally biased stretch (polar residues) spans 67-84 (DSTAQDVNQSLRSATDSL). The tract at residues 67 to 165 (DSTAQDVNQS…PKSPSTGNAT (99 aa)) is disordered. Over residues 127 to 159 (KLPGTPATLPATAAAEPTPAAPAASQAEAPKSP) the composition is skewed to low complexity.

Belongs to the TatB family. As to quaternary structure, the Tat system comprises two distinct complexes: a TatABC complex, containing multiple copies of TatA, TatB and TatC subunits, and a separate TatA complex, containing only TatA subunits. Substrates initially bind to the TatABC complex, which probably triggers association of the separate TatA complex to form the active translocon.

The protein localises to the cell inner membrane. In terms of biological role, part of the twin-arginine translocation (Tat) system that transports large folded proteins containing a characteristic twin-arginine motif in their signal peptide across membranes. Together with TatC, TatB is part of a receptor directly interacting with Tat signal peptides. TatB may form an oligomeric binding site that transiently accommodates folded Tat precursor proteins before their translocation. The sequence is that of Sec-independent protein translocase protein TatB from Bordetella avium (strain 197N).